The chain runs to 227 residues: AN1-type zinc finger protein 3 (227 aa).

Residues 12 to 44 form an A20-type zinc finger; it reads PSLPPRCPCGFWGSSKTMNLCSKCFADFQKKQP. C18, C20, C32, and C35 together coordinate Zn(2+). Disordered stretches follow at residues 41–99 and 113–151; these read KKQP…TEEC and PTKRSCGADSQSENEASPVKRPRLVENPERPEESGRSKQ. Composition is skewed to low complexity over residues 49 to 59 and 66 to 77; these read TPSTSNSQSDL and SDNNNTSVTTPT. 2 stretches are compositionally biased toward polar residues: residues 78–96 and 113–127; these read LSPSQQSLPTELNVTSPST and PTKRSCGADSQSENE. The segment covering 135 to 148 has biased composition (basic and acidic residues); it reads RLVENPERPEESGR. The AN1-type zinc-finger motif lies at 151-200; the sequence is QKSRRRCFQCQTKLELVQQELGSCRCGYVFCMLHRLPEQHDCTFDHMGRG. Zn(2+)-binding residues include C157, C160, C174, C176, C181, H184, H190, and C192.

As to expression, expressed in testis.

This Mus musculus (Mouse) protein is AN1-type zinc finger protein 3 (Zfand3).